Reading from the N-terminus, the 389-residue chain is Phenylpropanoylacetyl-CoA synthase (389 aa).

Cys-163 is a catalytic residue.

This sequence belongs to the thiolase-like superfamily. Chalcone/stilbene synthases family. In terms of assembly, homodimer. Expressed in both the leaf and rhizome, with higher expression in the rhizome.

The catalysed reaction is (E)-feruloyl-CoA + malonyl-CoA + H(+) = (E)-feruloylacetyl-CoA + CO2 + CoA. It carries out the reaction 4-coumaroyl-CoA + malonyl-CoA + H(+) = (4-coumaroyl)acetyl-CoA + CO2 + CoA. The protein operates within secondary metabolite biosynthesis; flavonoid biosynthesis. Functionally, catalyzes the formation of feruloyldiketide-CoA by condensing feruloyl-CoA and malonyl-CoA in the curcuminoid biosynthesis. Has no activity with cinnamoyl-CoA. The protein is Phenylpropanoylacetyl-CoA synthase (DCS) of Curcuma longa (Turmeric).